The sequence spans 263 residues: Diphthine synthase (263 aa).

S-adenosyl-L-methionine-binding positions include Leu-9, Asp-84, Met-87, Ser-112–Ile-113, Leu-164, Ala-207, and His-232.

The protein belongs to the diphthine synthase family. As to quaternary structure, homodimer.

The catalysed reaction is 2-[(3S)-amino-3-carboxypropyl]-L-histidyl-[translation elongation factor 2] + 3 S-adenosyl-L-methionine = diphthine-[translation elongation factor 2] + 3 S-adenosyl-L-homocysteine + 3 H(+). The protein operates within protein modification; peptidyl-diphthamide biosynthesis. Functionally, S-adenosyl-L-methionine-dependent methyltransferase that catalyzes the trimethylation of the amino group of the modified target histidine residue in translation elongation factor 2 (EF-2), to form an intermediate called diphthine. The three successive methylation reactions represent the second step of diphthamide biosynthesis. The sequence is that of Diphthine synthase from Methanosphaera stadtmanae (strain ATCC 43021 / DSM 3091 / JCM 11832 / MCB-3).